Here is a 227-residue protein sequence, read N- to C-terminus: NAD(P)H-hydrate epimerase (227 aa).

One can recognise a YjeF N-terminal domain in the interval 10–227 (MRALETAAFN…GKIMVQYIGL (218 aa)). 62–66 (NNGGD) is a (6S)-NADPHX binding site. Positions 63 and 142 each coordinate K(+). Residues 146 to 152 (GIGLNRP) and Asp-176 contribute to the (6S)-NADPHX site. Residue Ser-179 participates in K(+) binding.

It belongs to the NnrE/AIBP family. It depends on K(+) as a cofactor.

It carries out the reaction (6R)-NADHX = (6S)-NADHX. The catalysed reaction is (6R)-NADPHX = (6S)-NADPHX. Catalyzes the epimerization of the S- and R-forms of NAD(P)HX, a damaged form of NAD(P)H that is a result of enzymatic or heat-dependent hydration. This is a prerequisite for the S-specific NAD(P)H-hydrate dehydratase to allow the repair of both epimers of NAD(P)HX. In Roseobacter litoralis (strain ATCC 49566 / DSM 6996 / JCM 21268 / NBRC 15278 / OCh 149), this protein is NAD(P)H-hydrate epimerase.